Consider the following 376-residue polypeptide: Galactoside alpha-(1,2)-fucosyltransferase 1 (376 aa).

The Cytoplasmic segment spans residues 1–12 (MWTPSRKQLCLA). Residues 13-29 (FLSVCVLSAGSFFFHLN) traverse the membrane as a helical; Signal-anchor for type II membrane protein segment. Residues 30–376 (GGNFFQNALT…WETDSLFRLA (347 aa)) lie on the Lumenal side of the membrane. Asn64, Asn302, and Asn328 each carry an N-linked (GlcNAc...) asparagine glycan.

This sequence belongs to the glycosyltransferase 11 family.

The protein localises to the golgi apparatus. The protein resides in the golgi stack membrane. The catalysed reaction is a beta-D-galactosyl-(1-&gt;4)-N-acetyl-beta-D-glucosaminyl derivative + GDP-beta-L-fucose = an alpha-L-Fuc-(1-&gt;2)-beta-D-Gal-(1-&gt;4)-beta-D-GlcNAc derivative + GDP + H(+). It catalyses the reaction a ganglioside GA1 + GDP-beta-L-fucose = a ganglioside Fuc-GA1 + GDP + H(+). The enzyme catalyses a beta-D-Gal-(1-&gt;3)-beta-D-GlcNAc-(1-&gt;3)-beta-D-Gal-(1-&gt;4)-beta-D-Glc-(1&lt;-&gt;1')-Cer(d18:1(4E)) + GDP-beta-L-fucose = alpha-L-fucosyl-(1-&gt;2)- beta-D-galactosyl-(1-&gt;3)-N-acetyl-beta-D-glucosaminyl-(1-&gt;3)-beta-D-galactosyl-(1-&gt;4)-beta-D-glucosyl-(1&lt;-&gt;1')-N-acylsphing-4-enine + GDP + H(+). It carries out the reaction a neolactoside nLc4Cer(d18:1(4E)) + GDP-beta-L-fucose = a neolactoside IV(2)-alpha-Fuc-nLc4Cer(d18:1(4E)) + GDP + H(+). The catalysed reaction is a ganglioside GM1 + GDP-beta-L-fucose = a ganglioside Fuc-GM1 + GDP + H(+). It catalyses the reaction beta-D-galactosyl-(1-&gt;3)-N-acetyl-D-galactosamine + GDP-beta-L-fucose = alpha-L-fucosyl-(1-&gt;2)-beta-D-galactosyl-(1-&gt;3)-N-acetyl-D-galactosamine + GDP + H(+). The protein operates within protein modification; protein glycosylation. Functionally, catalyzes the transfer of L-fucose, from a guanosine diphosphate-beta-L-fucose, to the terminal galactose residue of glycoconjugates through an alpha(1,2) linkage leading to H antigen synthesis that is an intermediate substrate in the synthesis of ABO blood group antigens. H antigen is essential for maturation of the glomerular layer of the main olfactory bulb, in cell migration and early cell-cell contacts during tumor associated angiogenesis. Preferentially fucosylates soluble lactose and to a lesser extent fucosylates glycolipids gangliosides GA1 and GM1a. The protein is Galactoside alpha-(1,2)-fucosyltransferase 1 of Rattus norvegicus (Rat).